The primary structure comprises 270 residues: Putative phosphoenolpyruvate synthase regulatory protein (270 aa).

ADP is bound at residue 150 to 157 (GVSRCGKT).

Belongs to the pyruvate, phosphate/water dikinase regulatory protein family. PSRP subfamily.

The enzyme catalyses [pyruvate, water dikinase] + ADP = [pyruvate, water dikinase]-phosphate + AMP + H(+). It catalyses the reaction [pyruvate, water dikinase]-phosphate + phosphate + H(+) = [pyruvate, water dikinase] + diphosphate. Functionally, bifunctional serine/threonine kinase and phosphorylase involved in the regulation of the phosphoenolpyruvate synthase (PEPS) by catalyzing its phosphorylation/dephosphorylation. The sequence is that of Putative phosphoenolpyruvate synthase regulatory protein from Shewanella piezotolerans (strain WP3 / JCM 13877).